Here is a 445-residue protein sequence, read N- to C-terminus: 6-phosphogluconate dehydrogenase, decarboxylating (445 aa).

NADP(+) is bound by residues 1 to 4, 22 to 24, 63 to 65, and N91; these read AVMG, NRS, and VKA. Residues N91 and 117–119 each bind substrate; that span reads SGG. The active-site Proton acceptor is the K172. Position 175–176 (175–176) interacts with substrate; the sequence is HN. The active-site Proton donor is E179. 5 residues coordinate substrate: Y180, K249, R276, R434, and H440.

Belongs to the 6-phosphogluconate dehydrogenase family. Homodimer.

It carries out the reaction 6-phospho-D-gluconate + NADP(+) = D-ribulose 5-phosphate + CO2 + NADPH. Its pathway is carbohydrate degradation; pentose phosphate pathway; D-ribulose 5-phosphate from D-glucose 6-phosphate (oxidative stage): step 3/3. In terms of biological role, catalyzes the oxidative decarboxylation of 6-phosphogluconate to ribulose 5-phosphate and CO(2), with concomitant reduction of NADP to NADPH. This is 6-phosphogluconate dehydrogenase, decarboxylating (gnd) from Shigella dysenteriae.